The following is a 127-amino-acid chain: Ribosome-binding factor A (127 aa).

Belongs to the RbfA family. As to quaternary structure, monomer. Binds 30S ribosomal subunits, but not 50S ribosomal subunits or 70S ribosomes.

Its subcellular location is the cytoplasm. Functionally, one of several proteins that assist in the late maturation steps of the functional core of the 30S ribosomal subunit. Associates with free 30S ribosomal subunits (but not with 30S subunits that are part of 70S ribosomes or polysomes). Required for efficient processing of 16S rRNA. May interact with the 5'-terminal helix region of 16S rRNA. The protein is Ribosome-binding factor A of Stenotrophomonas maltophilia (strain K279a).